Reading from the N-terminus, the 223-residue chain is ATP-dependent dethiobiotin synthetase BioD (223 aa).

Mg(2+) is bound at residue T16. K37 is an active-site residue. S41 is a binding site for substrate. Residues D50 and E111 each contribute to the Mg(2+) site. Residues D50, 111–114 (EGAG), 171–172 (NQ), 201–203 (AHV), and E208 contribute to the ATP site.

It belongs to the dethiobiotin synthetase family. As to quaternary structure, homodimer. Mg(2+) is required as a cofactor.

It localises to the cytoplasm. It catalyses the reaction (7R,8S)-7,8-diammoniononanoate + CO2 + ATP = (4R,5S)-dethiobiotin + ADP + phosphate + 3 H(+). Its pathway is cofactor biosynthesis; biotin biosynthesis; biotin from 7,8-diaminononanoate: step 1/2. Functionally, catalyzes a mechanistically unusual reaction, the ATP-dependent insertion of CO2 between the N7 and N8 nitrogen atoms of 7,8-diaminopelargonic acid (DAPA, also called 7,8-diammoniononanoate) to form a ureido ring. This chain is ATP-dependent dethiobiotin synthetase BioD, found in Anaeromyxobacter sp. (strain Fw109-5).